Here is a 424-residue protein sequence, read N- to C-terminus: Histidine--tRNA ligase (424 aa).

It belongs to the class-II aminoacyl-tRNA synthetase family. As to quaternary structure, homodimer.

The protein localises to the cytoplasm. The enzyme catalyses tRNA(His) + L-histidine + ATP = L-histidyl-tRNA(His) + AMP + diphosphate + H(+). This Shigella flexneri protein is Histidine--tRNA ligase.